The chain runs to 220 residues: DNA mismatch repair protein MutH (220 aa).

Belongs to the MutH family.

The protein resides in the cytoplasm. Sequence-specific endonuclease that cleaves unmethylated GATC sequences. It is involved in DNA mismatch repair. This chain is DNA mismatch repair protein MutH, found in Buchnera aphidicola subsp. Baizongia pistaciae (strain Bp).